The sequence spans 184 residues: Oligoribonuclease (184 aa).

The region spanning 9-172 (LIWIDLEMTG…DDIRESIEEL (164 aa)) is the Exonuclease domain. Tyr-130 is an active-site residue.

The protein belongs to the oligoribonuclease family.

It localises to the cytoplasm. Functionally, 3'-to-5' exoribonuclease specific for small oligoribonucleotides. The polypeptide is Oligoribonuclease (Actinobacillus pleuropneumoniae serotype 5b (strain L20)).